A 544-amino-acid polypeptide reads, in one-letter code: Chaperonin GroEL (544 aa).

ATP-binding positions include 29–32 (TLGP), 86–90 (DGTTT), Gly413, 476–478 (NAA), and Asp492.

It belongs to the chaperonin (HSP60) family. In terms of assembly, forms a cylinder of 14 subunits composed of two heptameric rings stacked back-to-back. Interacts with the co-chaperonin GroES.

It localises to the cytoplasm. It catalyses the reaction ATP + H2O + a folded polypeptide = ADP + phosphate + an unfolded polypeptide.. Functionally, together with its co-chaperonin GroES, plays an essential role in assisting protein folding. The GroEL-GroES system forms a nano-cage that allows encapsulation of the non-native substrate proteins and provides a physical environment optimized to promote and accelerate protein folding. This is Chaperonin GroEL from Halalkalibacterium halodurans (strain ATCC BAA-125 / DSM 18197 / FERM 7344 / JCM 9153 / C-125) (Bacillus halodurans).